Reading from the N-terminus, the 944-residue chain is E3 ubiquitin-protein ligase JMJ24 (944 aa).

Disordered regions lie at residues glutamine 20–aspartate 40 and alanine 77–glycine 103. Positions isoleucine 38 to alanine 83 constitute a WRC domain. Residues lysine 73–alanine 80 carry the Nuclear localization signal 1 motif. A PHD-type; atypical zinc finger spans residues glycine 217–leucine 269. Positions 220, 223, 234, 237, 243, 246, 263, and 266 each coordinate Zn(2+). A Nuclear localization signal 2 motif is present at residues glutamate 323–glutamate 330. In terms of domain architecture, JmjC spans proline 621 to arginine 873. Residues glutamate 685–glutamate 703 show a composition bias toward basic and acidic residues. The disordered stretch occupies residues glutamate 685–arginine 715.

The protein belongs to the JARID1 histone demethylase family. As to quaternary structure, homodimer. Interacts with RDR2. Binds to CMT3. Associates with the E2 ubiquitin-conjugating enzyme UBC10. Self-ubiquitinates. As to expression, expressed in inflorescences, flowers, roots, siliques, leaves and stems, especially in the vasculature (mainly phloem), with highest levels in floral organs.

It is found in the nucleus. The catalysed reaction is S-ubiquitinyl-[E2 ubiquitin-conjugating enzyme]-L-cysteine + [acceptor protein]-L-lysine = [E2 ubiquitin-conjugating enzyme]-L-cysteine + N(6)-ubiquitinyl-[acceptor protein]-L-lysine.. Binds histone H3 but seems to have lost demethylase activity probably due to its inability to bind iron Fe(2+). Possesses E3 ubiquitin ligase activity and targets directly CMT3 for proteasomal degradation to initiate destabilization of the heterochromatic state (e.g. CHG cytosine methylation and H3K9me2) of endogenous silenced loci. Required for the removal of repressive H3K9me2 histone marks to facilitate the transcription of AtSN1, AtMu1c, solo LTR and SDC, thus counteracting their transcriptional silencing. Mainly required to promote the basal level transcription of silenced loci such as TE and repeats targeted by RNA-dependent DNA methylation (RdDM) for silencing, a specialized branch of the RNA interference (RNAi) pathway. Also cooperates with RNAi pathways for gene silencing both by contributing to the production of 24-nt siRNA to initiate RdDM and by recruiting RDR2 to enable local transcripts to make dsRNA. Antagonizes histone H3K9 demethylase IBM1/JMJ25 function. The polypeptide is E3 ubiquitin-protein ligase JMJ24 (Arabidopsis thaliana (Mouse-ear cress)).